Here is a 376-residue protein sequence, read N- to C-terminus: Heme-dependent oxidative N-demethylase gamma subunit (376 aa).

The heme-dependent oxidative N-demethylase (HODM) is a heterotetramer composed of a catalytic alpha subunit, a FMN/2Fe-2S-dependent oxidoreductase beta subunit, a gamma subunit with putative aminotransferase activity, and a delta subunit of unknown function.

Functionally, component of the heme-dependent oxidative N-demethylase (HODM) enzyme, that catalyzes the NADPH-dependent oxidation of dimethylamine (DMA) to methylamine (MA) and formaldehyde. Functions in bacterial methylated amine catabolism, linking alkylamine oxidation to the tetrahydrofolate C1 pool. The gamma subunit of HODM may act as an aminomethyltransferase involved in the detoxification of formaldehyde released by the alpha subunit; this process requires tetrahydrofolate (THF). The protein is Heme-dependent oxidative N-demethylase gamma subunit of Ectopseudomonas mendocina (strain ymp) (Pseudomonas mendocina).